The chain runs to 359 residues: Guanine nucleotide-binding protein subunit alpha-11 (359 aa).

2 S-palmitoyl cysteine lipidation sites follow: cysteine 9 and cysteine 10. The region spanning 38–359 (RELKLLLLGT…QLNLKEYNLV (322 aa)) is the G-alpha domain. The segment at 41 to 54 (KLLLLGTGESGKST) is G1 motif. GTP-binding positions include 46 to 53 (GTGESGKS) and 180 to 183 (LRVR). Serine 53 lines the Mg(2+) pocket. Positions 178 to 186 (DVLRVRVPT) are G2 motif. Residue threonine 186 participates in Mg(2+) binding. Residues 201–210 (FRMVDVGGQR) form a G3 motif region. Residues 270-277 (ILFLNKKD) are G4 motif. Residues 274 to 277 (NKKD) and alanine 331 contribute to the GTP site. Residues 329–334 (TCATDT) are G5 motif.

This sequence belongs to the G-alpha family. G(q) subfamily. G proteins are composed of 3 units; alpha, beta and gamma. The alpha chain contains the guanine nucleotide binding site. Interacts with RGS22. Interacts with NTSR1.

The protein localises to the cell membrane. The protein resides in the cytoplasm. The enzyme catalyses GTP + H2O = GDP + phosphate + H(+). Guanine nucleotide-binding proteins (G proteins) function as transducers downstream of G protein-coupled receptors (GPCRs) in numerous signaling cascades. The alpha chain contains the guanine nucleotide binding site and alternates between an active, GTP-bound state and an inactive, GDP-bound state. Signaling by an activated GPCR promotes GDP release and GTP binding. The alpha subunit has a low GTPase activity that converts bound GTP to GDP, thereby terminating the signal. Both GDP release and GTP hydrolysis are modulated by numerous regulatory proteins. Signaling is mediated via phospholipase C-beta-dependent inositol lipid hydrolysis for signal propagation: activates phospholipase C-beta: following GPCR activation, GNA11 activates PLC-beta (PLCB1, PLCB2, PLCB3 or PLCB4), leading to production of diacylglycerol (DAG) and inositol 1,4,5-trisphosphate (IP3). Transduces FFAR4 signaling in response to long-chain fatty acids (LCFAs). Together with GNAQ, required for heart development. In the respiratory epithelium, transmits OXGR1-dependent signals that lead to downstream intracellular Ca(2+) release and mucocilliary clearance of airborne pathogens. The protein is Guanine nucleotide-binding protein subunit alpha-11 (GNA11) of Bos taurus (Bovine).